A 109-amino-acid chain; its full sequence is Nucleoid-associated protein HI_0442 (109 aa).

The protein belongs to the YbaB/EbfC family. In terms of assembly, homodimer.

The protein localises to the cytoplasm. Its subcellular location is the nucleoid. In terms of biological role, binds to DNA and alters its conformation. May be involved in regulation of gene expression, nucleoid organization and DNA protection. The polypeptide is Nucleoid-associated protein HI_0442 (Haemophilus influenzae (strain ATCC 51907 / DSM 11121 / KW20 / Rd)).